The chain runs to 639 residues: MSGVPAVNISIESSAEKQVQEVGLDGSETYVLPLSMSQNLARLAQRIDFSQESGEEEAEAARELEWAEQEEEEGLVKFQPSLWPWDSVRNNLRSTLTEMCVLYDVLNIVKEKRYMHLDPVSQEALPPKPNQHGLLLVSKKKSLAAAAQILLKGAERLSKSVAENQENKRQRDFNSELLRLRQHWKLRKLGDKILGDLSYRSAGSLFPHHGTFEVIKNTDIDLDKKMPEDYCPLDVHIPSDLEGSAYLKVSIQKQAPDIGDLGTVNLFRRPLPKAKPGTPHWQTRLEAAQNVLLCKEVFAQLSREAVQIKSQIPHIVVKNQIISQPFPGLQLSISLCHSSNDKKSQKSNSDKMGAEDHLYVLEHNLHQLIREFHKQTLSNIVMPHPASAPFGHKRMRLAGPQAFDKNEMGFMQQNEGLLEKIIKQAKHIFLRRRTARTIDSLASRIEDPQIQAHWSSINDVYESSVKVLITSQGYEQICKSIQLQLNIGVDQIRVVHRDGRVITLSHQEQELQDFLLSQMSQHQVLAVQQLAKVMGWHVLSFTNHVGLGQVESVGNASSITVTSPNGDYAISVRNGPESGTKVMVQFPRSQCKDLPKGDVLQENKWQYLRGPYKEVQWNKMEGRNFVYKMELLMAALTPC.

This sequence belongs to the Mediator complex subunit 17 family. As to quaternary structure, component of the Mediator complex.

It localises to the nucleus. Its function is as follows. Component of the Mediator complex, a coactivator involved in the regulated transcription of nearly all RNA polymerase II-dependent genes. Mediator functions as a bridge to convey information from gene-specific regulatory proteins to the basal RNA polymerase II transcription machinery. Mediator is recruited to promoters by direct interactions with regulatory proteins and serves as a scaffold for the assembly of a functional preinitiation complex with RNA polymerase II and the general transcription factors. This chain is Mediator of RNA polymerase II transcription subunit 17 (med17), found in Xenopus tropicalis (Western clawed frog).